The following is a 117-amino-acid chain: Large ribosomal subunit protein eL8 (117 aa).

The protein belongs to the eukaryotic ribosomal protein eL8 family. Part of the 50S ribosomal subunit. Part of the RNase P complex.

The protein resides in the cytoplasm. The enzyme catalyses Endonucleolytic cleavage of RNA, removing 5'-extranucleotides from tRNA precursor.. Its function is as follows. Multifunctional RNA-binding protein that recognizes the K-turn motif in ribosomal RNA, the RNA component of RNase P, box H/ACA, box C/D and box C'/D' sRNAs. Part of ribonuclease P, a protein complex that generates mature tRNA molecules by cleaving their 5'-ends, this subunit dramatically stimulates RNase P activity. The protein is Large ribosomal subunit protein eL8 of Methanococcus maripaludis (strain DSM 14266 / JCM 13030 / NBRC 101832 / S2 / LL).